Here is a 540-residue protein sequence, read N- to C-terminus: Probable protein kinase UbiB (540 aa).

A helical transmembrane segment spans residues Leu-24 to Trp-44. Residues Arg-126–Leu-494 form the Protein kinase domain. Residues Leu-132–Val-140 and Lys-154 each bind ATP. Asp-289 serves as the catalytic Proton acceptor. The next 2 helical transmembrane spans lie at Leu-496–Ala-516 and Leu-518–Val-538.

The protein belongs to the ABC1 family. UbiB subfamily.

The protein resides in the cell inner membrane. It functions in the pathway cofactor biosynthesis; ubiquinone biosynthesis [regulation]. In terms of biological role, is probably a protein kinase regulator of UbiI activity which is involved in aerobic coenzyme Q (ubiquinone) biosynthesis. The protein is Probable protein kinase UbiB of Pseudomonas putida (strain GB-1).